We begin with the raw amino-acid sequence, 700 residues long: Calpain-2 catalytic subunit (700 aa).

An N-acetylalanine modification is found at Ala2. Residues 2–19 constitute a propeptide, anchors to the small subunit; it reads AGIAMKLAKDREAAEGLG. One can recognise a Calpain catalytic domain in the interval 45–344; it reads LFQDPSFPAL…YSRLEICNLT (300 aa). 3 residues coordinate Ca(2+): Ile89, Gly91, and Asp96. Cys105 is a catalytic residue. Residues Glu175, Gln229, and Lys230 each contribute to the Ca(2+) site. Active-site residues include His262 and Asn286. Ca(2+) is bound by residues Glu292, Asp299, Gln319, and Glu323. Residues 345 to 514 form a domain III region; the sequence is PDTLTCDSYK…KKADYQTVDD (170 aa). The interval 515 to 529 is linker; it reads EIEANIEEIEANEED. The segment at 530–700 is domain IV; the sequence is IGDGFRRLFA…LISWLSFSVL (171 aa). Ala542, Asp545, Glu547, Glu552, Asp585, Asp587, Ser589, Lys591, Glu596, Asp615, Asp617, Ser619, Thr621, Glu626, Asp658, and Asn661 together coordinate Ca(2+). EF-hand domains follow at residues 572-605 and 602-637; these read FSIE…TKIQ and TKIQ…AGFK. One can recognise an EF-hand 3 domain in the interval 667-700; it reads VRLEILFKIFKQLDPENTGTIQLDLISWLSFSVL.

Belongs to the peptidase C2 family. In terms of assembly, forms a heterodimer with a small (regulatory) subunit (CAPNS1). Interacts with CPEB3; this leads to cleavage of CPEB3. Ca(2+) serves as cofactor. As to expression, ubiquitous.

It localises to the cytoplasm. Its subcellular location is the cell membrane. It carries out the reaction Broad endopeptidase specificity.. Activated by 200-1000 micromolar concentrations of calcium and inhibited by calpastatin. Calcium-regulated non-lysosomal thiol-protease which catalyze limited proteolysis of substrates involved in cytoskeletal remodeling and signal transduction. Proteolytically cleaves MYOC at 'Arg-226'. Proteolytically cleaves CPEB3 following neuronal stimulation which abolishes CPEB3 translational repressor activity, leading to translation of CPEB3 target mRNAs. This is Calpain-2 catalytic subunit (Capn2) from Rattus norvegicus (Rat).